The sequence spans 452 residues: CASP-like protein 4A1 (452 aa).

Residues 1–17 (MGLRDSLKEREDRRSSE) are compositionally biased toward basic and acidic residues. Disordered stretches follow at residues 1 to 39 (MGLR…RKES), 71 to 147 (RAGP…ARSS), and 164 to 283 (AKYV…VQFR). Topologically, residues 1-305 (MGLRDSLKER…KRRAAAMQRT (305 aa)) are cytoplasmic. Positions 25–34 (SWMTRESTTG) are enriched in polar residues. Composition is skewed to low complexity over residues 105-126 (QAQA…TGSG) and 190-205 (GWYS…AAPP). Over residues 211-272 (DPPPAPPRRQ…TAPAPAPVPA (62 aa)) the composition is skewed to pro residues. A helical membrane pass occupies residues 306 to 326 (ALLARGAAAGLCLAALAVLAA). Residues 327-347 (DTRKGWARDSYSNYTQFRYSE) lie on the Extracellular side of the membrane. Asparagine 339 is a glycosylation site (N-linked (GlcNAc...) asparagine). A helical transmembrane segment spans residues 348 to 368 (AVNVIGFIYSVFQFVALVELM). The Cytoplasmic segment spans residues 369–389 (RRNKHLIPHPKRDLFDFTMDQ). Residues 390–406 (VLTYLLISSSSSATARV) traverse the membrane as a helical segment. Residues 407-423 (SDLIDNWGSDPFPSMAN) lie on the Extracellular side of the membrane. Asparagine 423 carries an N-linked (GlcNAc...) asparagine glycan. A helical membrane pass occupies residues 424 to 444 (GSIAISFLAFAVFAICSLISA). The Cytoplasmic portion of the chain corresponds to 445–452 (YNLFRRDV).

The protein belongs to the Casparian strip membrane proteins (CASP) family. As to quaternary structure, homodimer and heterodimers.

It is found in the cell membrane. The polypeptide is CASP-like protein 4A1 (Sorghum bicolor (Sorghum)).